Reading from the N-terminus, the 424-residue chain is Adenylosuccinate synthetase (424 aa).

Residues 12-18 (GDEGKGK) and 40-42 (GHT) contribute to the GTP site. The Proton acceptor role is filled by aspartate 13. Mg(2+) contacts are provided by aspartate 13 and glycine 40. IMP contacts are provided by residues 13–16 (DEGK), 38–41 (NAGH), threonine 130, arginine 144, asparagine 220, threonine 235, and arginine 299. Histidine 41 serves as the catalytic Proton donor. 295-301 (VTTGRRR) provides a ligand contact to substrate. Residues arginine 301, 327–329 (KLD), and 412–414 (GTG) each bind GTP.

The protein belongs to the adenylosuccinate synthetase family. As to quaternary structure, homodimer. Mg(2+) serves as cofactor.

Its subcellular location is the cytoplasm. It catalyses the reaction IMP + L-aspartate + GTP = N(6)-(1,2-dicarboxyethyl)-AMP + GDP + phosphate + 2 H(+). It functions in the pathway purine metabolism; AMP biosynthesis via de novo pathway; AMP from IMP: step 1/2. Its function is as follows. Plays an important role in the de novo pathway and in the salvage pathway of purine nucleotide biosynthesis. Catalyzes the first committed step in the biosynthesis of AMP from IMP. This is Adenylosuccinate synthetase from Aspergillus fumigatus (strain CBS 144.89 / FGSC A1163 / CEA10) (Neosartorya fumigata).